A 1101-amino-acid chain; its full sequence is Isoleucine--tRNA ligase (1101 aa).

The 'HIGH' region signature appears at 50-60 (PFANGLPHYGH). The 'KMSKS' region motif lies at 629 to 633 (KLSKR). Lys-632 contributes to the ATP binding site.

Belongs to the class-I aminoacyl-tRNA synthetase family. IleS type 2 subfamily. Monomer. Requires Zn(2+) as cofactor.

The protein resides in the cytoplasm. The catalysed reaction is tRNA(Ile) + L-isoleucine + ATP = L-isoleucyl-tRNA(Ile) + AMP + diphosphate. Its function is as follows. Catalyzes the attachment of isoleucine to tRNA(Ile). As IleRS can inadvertently accommodate and process structurally similar amino acids such as valine, to avoid such errors it has two additional distinct tRNA(Ile)-dependent editing activities. One activity is designated as 'pretransfer' editing and involves the hydrolysis of activated Val-AMP. The other activity is designated 'posttransfer' editing and involves deacylation of mischarged Val-tRNA(Ile). This is Isoleucine--tRNA ligase from Anaplasma marginale (strain St. Maries).